The following is a 1144-amino-acid chain: Probable translation initiation factor IF-2 (1144 aa).

Residues 232–362 (FAGVMFGDGS…LSLLLLRFGI (131 aa)) form the DOD-type homing endonuclease domain. The tr-type G domain maps to 551–768 (TTETHNFVAN…LIAGLSQKYL (218 aa)). GTP contacts are provided by residues 624–628 (DTPGH) and 678–681 (NKID).

The protein belongs to the TRAFAC class translation factor GTPase superfamily. Classic translation factor GTPase family. IF-2 subfamily. Post-translationally, this protein undergoes a protein self splicing that involves a post-translational excision of the intervening region (intein) followed by peptide ligation.

Functionally, function in general translation initiation by promoting the binding of the formylmethionine-tRNA to ribosomes. Seems to function along with eIF-2. This Thermococcus kodakarensis (strain ATCC BAA-918 / JCM 12380 / KOD1) (Pyrococcus kodakaraensis (strain KOD1)) protein is Probable translation initiation factor IF-2 (infB).